An 837-amino-acid polypeptide reads, in one-letter code: CoA-transferase/lyase DddD (837 aa).

The Nucleophile role is filled by aspartate 602.

Belongs to the CoA-transferase III family.

In terms of biological role, dimethyl sulfide (DMS)-producing enzyme. Acts both as a transferase and a lyase: uses acetyl-coenzyme A (acetyl-coA) and dimethylsulfoniopropionate (DMSP) as substrates to produce DMS, acetate and 3-hydroxypropionate-CoA (3HP-CoA). Mediates the CoA-transferase prior to lyase activity. DMS is the principal form by which sulfur is transported from oceans to the atmosphere and is a key component of the ocean sulfur cycle. This chain is CoA-transferase/lyase DddD, found in Marinomonas sp. (strain MWYL1).